The following is a 51-amino-acid chain: Small ribosomal subunit protein uS14 (51 aa).

Residues Cys-16, Cys-19, Cys-34, and Cys-37 each contribute to the Zn(2+) site.

This sequence belongs to the universal ribosomal protein uS14 family. Zinc-binding uS14 subfamily. In terms of assembly, part of the 30S ribosomal subunit. Zn(2+) serves as cofactor.

Functionally, binds 16S rRNA, required for the assembly of 30S particles. This chain is Small ribosomal subunit protein uS14, found in Archaeoglobus fulgidus (strain ATCC 49558 / DSM 4304 / JCM 9628 / NBRC 100126 / VC-16).